The following is a 65-amino-acid chain: Beta-defensin 106A (65 aa).

The signal sequence occupies residues 1 to 20; the sequence is MRTFLFLFAVLFFLTPAKNA. Disulfide bonds link Cys-26–Cys-53, Cys-33–Cys-47, and Cys-37–Cys-54.

This sequence belongs to the beta-defensin family. Monomer. Interacts with CCR2 (via extracellular N-terminal region); this interaction may preferentially require specific tyrosine sulfation on CCR2.

Its subcellular location is the secreted. The protein resides in the membrane. Its function is as follows. Has antibacterial activity. Acts as a ligand for C-C chemokine receptor CCR2. The sequence is that of Beta-defensin 106A (DEFB106A) from Gorilla gorilla gorilla (Western lowland gorilla).